Consider the following 816-residue polypeptide: MFSRKKPEPAKRRQHDLSQFGLTEIPDDFDPSAGYGEDDGGDSDLEAELAAITGGEGAKPKPKPKAKLLPASDLDKMIADSLRDVSDDDDDDNLESDPDLLGELSGIGGLEEAEEEEPVAQPPAASEEPVQTFLPTTTVDTLSIIKQRLEMYKQAEANAKTAGDSGKARRFGRGLKTLKDLHRQAAAGKSINVDDIPPEVSVKPIGGQAPPVPAEESPAPSTPASPPPVPSRAAPDPPTPGTPVEPTTSVAPTSPPNPLVTQMRSRQTDYKAAALQSKRSGDISTALQFLKVVKQFDVVIKMCEDGQEVDLSDMPPPPAEFLEFLKKMQEEAAAEAVAEPTAAPEPTPVAPAPVLAAATNMLEALQQRLEKYQSVEAAAKAENNSGKARRFGRIVKQYEDAIKLYKAGKPVPYDELPVPPGFGPLPTADAAPVAPTPSLPTSPTSPPPTASTSAGGTPSSSSATTPTAPRKAPSPPKPKELTTRTSGNQQKNNIAEQQMKLLLERQKEFKLAAIEAKKAGEIDQAKEYLKIFKGFDSLLNAASSGLPVDLSTLPVPPSQRDNLEASFAIVSAEECDPTDDICEIGVRMEEQLAKQLMMCKNTRDHHKAMGDVAGMNRFENLALTVQKDLDLVRYSKRKNEPLPKFHYEKRSFNIVHCNTDLTDSELEIVVVRGISYNVANPKDVDTYVRVEFPLLNDESFKTKTNVIRDTSSPDYDERFKVDIQRTNRQFQRIFKRHGVKFEIYSRGGFLRSDTLIGTVNVKLQPLETKCEIHDTYDLMDGRKQVGGKLEVKIRVRNPILTKQMEHITEKWLVLDA.

Positions 1–11 (MFSRKKPEPAK) are enriched in basic and acidic residues. Disordered regions lie at residues 1 to 135 (MFSR…TFLP), 157 to 176 (ANAK…RGLK), and 186 to 269 (AAGK…RQTD). Positions 25–47 (IPDDFDPSAGYGEDDGGDSDLEA) are enriched in acidic residues. Positions 73 to 85 (DLDKMIADSLRDV) are enriched in basic and acidic residues. The span at 86 to 100 (SDDDDDDNLESDPDL) shows a compositional bias: acidic residues. The span at 122 to 131 (PPAASEEPVQ) shows a compositional bias: low complexity. The DM14 1 stretch occupies residues 145 to 200 (IKQRLEMYKQAEANAKTAGDSGKARRFGRGLKTLKDLHRQAAAGKSINVDDIPPEV). The segment covering 220-243 (PSTPASPPPVPSRAAPDPPTPGTP) has biased composition (pro residues). 2 DM14 regions span residues 265–317 (SRQT…MPPP) and 365–419 (LQQR…LPVP). Positions 355–382 (LAAATNMLEALQQRLEKYQSVEAAAKAE) form a coiled coil. Positions 418–492 (VPPGFGPLPT…TRTSGNQQKN (75 aa)) are disordered. Over residues 424-433 (PLPTADAAPV) the composition is skewed to low complexity. Over residues 434-449 (APTPSLPTSPTSPPPT) the composition is skewed to pro residues. The segment covering 450–471 (ASTSAGGTPSSSSATTPTAPRK) has biased composition (low complexity). Residues 483 to 492 (TRTSGNQQKN) are compositionally biased toward polar residues. The DM14 4 stretch occupies residues 502 to 556 (LLERQKEFKLAAIEAKKAGEIDQAKEYLKIFKGFDSLLNAASSGLPVDLSTLPVP). Residues 637–776 (RKNEPLPKFH…ETKCEIHDTY (140 aa)) enclose the C2 domain.

Belongs to the CC2D1 family. In terms of assembly, interacts (via DM14 domains 1 and 3) with shrb; the interaction is direct and blocks access to the surface involved in shrb polymerization. This interaction may be required for the ESCRT-III complex role in multivesicular body formation.

It is found in the cytoplasm. The protein localises to the cytosol. Its subcellular location is the apicolateral cell membrane. It localises to the cell cortex. The protein resides in the endosome. Its function is as follows. Phosphatidyl inositol monophosphate binding protein involved in endosomal protein sorting through regulation of the endosomal sorting required for transport (ESCRT) pathway. Required for full activity of the ESCRT-III complex core component shrb/shrub, probably by preventing its inappropriate polymerisation. Required, but not essential, for the efficient generation of intraluminal vesicles (ILVs) in multivesicular bodies (MVBs). Involved in a late stage of the endosomal pathway targeting transmembrane proteins of the plasma membrane for lysosomal degradation. Plays a critical role in regulation of multiple signal transduction pathways, including the Notch and BMP/decapentaplegic (dpp) signaling pathways, through targeting of membrane bound receptors to multivesicular bodies, isolating them from the cytoplasm and targeting them for lysosomal degradation. Involved in targeting N/Notch for endosomal degradation, negatively regulating the Notch signaling pathway. Regulates Notch signaling in imaginal disk cells and follicle cells during oogenesis and multiple developmental processes, including development of wings, veins, legs, eyes and bristles. Restricts the activity of Notch to the dorsoventral (D/V) boundary of the wing imaginal disk. In external sensory organ development regulates Notch signaling during asymmetric cell division and differentiation of sensory organ precursor cells. May be involved in regulation of apoptosis and cell growth independent of Notch signaling. Involved in targeting tkv for endosomal degradation, negatively regulating the BMP/decapentaplegic (dpp) signaling pathway. Regulates the BMP/dpp signaling pathway in follicle cells during oogenesis, but not in imaginal disk cells during wing development. May be involved in differentiation or morphogenesis of peripodial epithelial cells in the developing imaginal disk. Involved in abscission of germline cells during oogenesis. This Drosophila melanogaster (Fruit fly) protein is Coiled-coil and C2 domain-containing protein 1-like.